Reading from the N-terminus, the 642-residue chain is Extracellular metalloproteinase 4 (642 aa).

The N-terminal stretch at 1–18 (MHGLLLAGLLALPLNVLA) is a signal peptide. The propeptide occupies 19–253 (HPTESHSSGI…VHSVVDYVSA (235 aa)). The segment covering 49–60 (SDSLTGQDGQSF) has biased composition (polar residues). The disordered stretch occupies residues 49 to 72 (SDSLTGQDGQSFTASSADADTSSG). Residues 61-71 (TASSADADTSS) show a composition bias toward low complexity. N419 carries N-linked (GlcNAc...) asparagine glycosylation. H436 provides a ligand contact to Zn(2+). E437 is a catalytic residue. H440 serves as a coordination point for Zn(2+). Residues N509 and N602 are each glycosylated (N-linked (GlcNAc...) asparagine).

This sequence belongs to the peptidase M36 family. Requires Zn(2+) as cofactor.

It is found in the secreted. Secreted metalloproteinase that allows assimilation of proteinaceous substrates and probably acts as a virulence factor. The chain is Extracellular metalloproteinase 4 (MEP4) from Arthroderma gypseum (strain ATCC MYA-4604 / CBS 118893) (Microsporum gypseum).